Consider the following 150-residue polypeptide: MSLVRSGNVLDPMSVDFWADADPFGAVRSLAERCPVLTNVRVDWKETPTAHVFTADLPGVRKDQAKVEVEDGGVLVISGERAREEDVDGKNDERWHHVERSSGKFQRRFRLPRGARVDQVSASMDNGVLTVTVPKEETKKPQLKAIPISG.

In terms of domain architecture, sHSP spans 31–150 (AERCPVLTNV…PQLKAIPISG (120 aa)).

This sequence belongs to the small heat shock protein (HSP20) family. May form oligomeric structures.

It is found in the cytoplasm. The chain is 16.6 kDa heat shock protein (HSP16.6) from Oryza sativa subsp. japonica (Rice).